A 260-amino-acid chain; its full sequence is Dolichol-phosphate mannosyltransferase subunit 1 (260 aa).

An N-acetylalanine modification is found at A2. 2 positions are modified to phosphoserine: S3 and S9. The GDP-alpha-D-mannose site is built by P32, Y34, E36, I63, D65, D118, A119, D120, R147, R234, and K240. D120 is a Mg(2+) binding site. Residue D120 participates in Mn(2+) binding.

Belongs to the glycosyltransferase 2 family. In terms of assembly, component of the dolichol-phosphate mannose (DPM) synthase complex composed of DPM1, DPM2 and DPM3; within the complex, directly interacts with DPM3. This interaction stabilizes DPM1. The cofactor is Mg(2+). It depends on Mn(2+) as a cofactor. Requires Ca(2+) as cofactor.

It localises to the endoplasmic reticulum. The enzyme catalyses a di-trans,poly-cis-dolichyl phosphate + GDP-alpha-D-mannose = a di-trans,poly-cis-dolichyl beta-D-mannosyl phosphate + GDP. The protein operates within protein modification; protein glycosylation. Transfers mannose from GDP-mannose to dolichol monophosphate to form dolichol phosphate mannose (Dol-P-Man) which is the mannosyl donor in pathways leading to N-glycosylation, glycosyl phosphatidylinositol membrane anchoring, and O-mannosylation of proteins; catalytic subunit of the dolichol-phosphate mannose (DPM) synthase complex. In Homo sapiens (Human), this protein is Dolichol-phosphate mannosyltransferase subunit 1 (DPM1).